We begin with the raw amino-acid sequence, 565 residues long: NAD-dependent malic enzyme (565 aa).

The active-site Proton donor is the Tyr104. An NAD(+)-binding site is contributed by Arg157. Catalysis depends on Lys175, which acts as the Proton acceptor. A divalent metal cation is bound by residues Glu246, Asp247, and Asp270. Asp270 and Asn418 together coordinate NAD(+).

Belongs to the malic enzymes family. In terms of assembly, homotetramer. The cofactor is Mg(2+). It depends on Mn(2+) as a cofactor.

The catalysed reaction is (S)-malate + NAD(+) = pyruvate + CO2 + NADH. It catalyses the reaction oxaloacetate + H(+) = pyruvate + CO2. The polypeptide is NAD-dependent malic enzyme (Escherichia coli O157:H7).